Here is a 323-residue protein sequence, read N- to C-terminus: MTAGGYTLLDGLRLMELQMNKRQAADLTDSVTCLREGAPFYQVLKSLSFHKEAVGICYFAETHGELPASMIQSGELLERKIAQADQLKRVLRYPLFLIFTVAVMFYMLQSIIIPQFSGIYQSMNMETSRSTDMLFAFFQHIDLVIILLVLFTAGIGIYYWLVFKKKSPARQMLICIRIPLVGKLVKLFNSYFFSLQLSSLLKSGLSIYDSLNAFKHQTFLPFYRCEAEQLIERLKAGESIESAICGSLFYETDLSKVISHGQLSGRLDRELFTYSQFILQRLEHKAQKWTGILQPMIYGFVAAMILLVYLSMLVPMYQMMNQM.

3 consecutive transmembrane segments (helical) span residues 93–113, 143–163, and 296–316; these read YPLFLIFTVAVMFYMLQSIII, LVIILLVLFTAGIGIYYWLVF, and MIYGFVAAMILLVYLSMLVPM.

Belongs to the GSP F family.

The protein localises to the cell membrane. Required for transformation and DNA binding. The sequence is that of ComG operon protein 2 (comGB) from Bacillus subtilis (strain 168).